A 257-amino-acid chain; its full sequence is 3-alpha-hydroxysteroid dehydrogenase/carbonyl reductase (257 aa).

Residues 8-13, Asp-32, 41-42, and Gly-71 contribute to the NAD(+) site; these read GCATGI and DL. A substrate-binding site is contributed by Ser-114. The NAD(+) site is built by Tyr-155 and Lys-159. The active-site Proton acceptor is the Tyr-155.

This sequence belongs to the short-chain dehydrogenases/reductases (SDR) family. In terms of assembly, homodimer.

The protein localises to the cytoplasm. It carries out the reaction a 3alpha-hydroxysteroid + NADP(+) = a 3-oxosteroid + NADPH + H(+). The catalysed reaction is a 3alpha-hydroxysteroid + NAD(+) = a 3-oxosteroid + NADH + H(+). In terms of biological role, catalyzes the reversible interconversion of hydroxy and oxo groups at position 3 of the steroid nucleus. Along with the 3 alpha-hydroxysteroid dehydrogenase and 3-oxo-reductase activities towards a variety of cis or trans fused A/B ring steroids, it also reduces several xenobiotic carbonyl compounds, including a metyrapone-based class of insecticides, to the respective alcohol metabolites. No detectable activity on testosterone, progesterone or 3-oxo-desogestrel. The polypeptide is 3-alpha-hydroxysteroid dehydrogenase/carbonyl reductase (hsdA) (Comamonas testosteroni (Pseudomonas testosteroni)).